Consider the following 354-residue polypeptide: Dual-specificity RNA methyltransferase RlmN (354 aa).

E86 acts as the Proton acceptor in catalysis. The region spanning 105–338 (RHARYTICVS…CTIRQSKGLD (234 aa)) is the Radical SAM core domain. A disulfide bridge links C112 with C343. The [4Fe-4S] cluster site is built by C119, C123, and C126. S-adenosyl-L-methionine contacts are provided by residues 169–170 (GE), S201, 224–226 (SLH), and N300. C343 functions as the S-methylcysteine intermediate in the catalytic mechanism.

It belongs to the radical SAM superfamily. RlmN family. [4Fe-4S] cluster is required as a cofactor.

The protein resides in the cytoplasm. It carries out the reaction adenosine(2503) in 23S rRNA + 2 reduced [2Fe-2S]-[ferredoxin] + 2 S-adenosyl-L-methionine = 2-methyladenosine(2503) in 23S rRNA + 5'-deoxyadenosine + L-methionine + 2 oxidized [2Fe-2S]-[ferredoxin] + S-adenosyl-L-homocysteine. It catalyses the reaction adenosine(37) in tRNA + 2 reduced [2Fe-2S]-[ferredoxin] + 2 S-adenosyl-L-methionine = 2-methyladenosine(37) in tRNA + 5'-deoxyadenosine + L-methionine + 2 oxidized [2Fe-2S]-[ferredoxin] + S-adenosyl-L-homocysteine. Specifically methylates position 2 of adenine 2503 in 23S rRNA and position 2 of adenine 37 in tRNAs. m2A2503 modification seems to play a crucial role in the proofreading step occurring at the peptidyl transferase center and thus would serve to optimize ribosomal fidelity. This chain is Dual-specificity RNA methyltransferase RlmN, found in Campylobacter fetus subsp. fetus (strain 82-40).